A 396-amino-acid polypeptide reads, in one-letter code: Na(+)/H(+) antiporter NhaA (396 aa).

Helical transmembrane passes span 14–34, 59–79, 95–115, 124–144, 154–174, 178–198, 205–225, 254–274, 278–298, 328–348, and 363–383; these read ASGIILIMAAVLAMILANSGL, LLLWINDGFMAIFFLLVGLEV, TFPAIAAVGGMLAPALIYTFF, AGWAIPAATDIAFALGVMALL, VFLLALAIMDDLGVIIIIALF, QLSLEALAVGILATLTLLWMN, IGLYMLVGLVLWVAVLKSGVH, ALHPWSAYLILPLFAFANAGV, GIGLSSLLSPVPMGIMLGLFV, IFAVSILCGIGFTMSMFIASL, and LGILVGSTLAAVVGYLALRMS.

It belongs to the NhaA Na(+)/H(+) (TC 2.A.33) antiporter family.

The protein resides in the cell inner membrane. It carries out the reaction Na(+)(in) + 2 H(+)(out) = Na(+)(out) + 2 H(+)(in). Na(+)/H(+) antiporter that extrudes sodium in exchange for external protons. In Aeromonas salmonicida (strain A449), this protein is Na(+)/H(+) antiporter NhaA.